Reading from the N-terminus, the 621-residue chain is UvrABC system protein C (621 aa).

Residues 13–92 (NEPGVYLMKN…IKKYSPKYNI (80 aa)) form the GIY-YIG domain. The 36-residue stretch at 204 to 239 (RSLLNKLKEEMQSASGNLEFEKAASLRDKMIAIENI) folds into the UVR domain.

This sequence belongs to the UvrC family. In terms of assembly, interacts with UvrB in an incision complex.

The protein resides in the cytoplasm. Functionally, the UvrABC repair system catalyzes the recognition and processing of DNA lesions. UvrC both incises the 5' and 3' sides of the lesion. The N-terminal half is responsible for the 3' incision and the C-terminal half is responsible for the 5' incision. This chain is UvrABC system protein C, found in Clostridium beijerinckii (strain ATCC 51743 / NCIMB 8052) (Clostridium acetobutylicum).